The chain runs to 221 residues: MALALAALAAVEPACGSGYQQLQNEEEPGEPEQTAGDAPPPYSSITAESAAYFDYKDESGFPKPPSYNVATTLPSYDEAERTKTEATIPLVPGRDEDFVGRDDFDDTDQLRIGNDGIFMLTFFMAFLFNWIGFFLSFCLTTSAAGRYGAISGFGLSLIKWILIVRFSTYFPGYFDGQYWLWWVFLVLGFLLFLRGFINYAKVRKMPETFSNLPRTRVLFIY.

Position 2 is an N-acetylalanine (alanine 2). Residues 2-41 are interaction with UBE2L3; it reads ALALAALAAVEPACGSGYQQLQNEEEPGEPEQTAGDAPPP. The Cytoplasmic segment spans residues 2 to 116; it reads ALALAALAAV…TDQLRIGNDG (115 aa). The interval 18–44 is disordered; that stretch reads GYQQLQNEEEPGEPEQTAGDAPPPYSS. 3 short sequence motifs (PPxY motif) span residues 39 to 42, 64 to 67, and 74 to 76; these read PPPY, PPSY, and PSY. The tract at residues 42 to 76 is interaction with ITCH; it reads YSSITAESAAYFDYKDESGFPKPPSYNVATTLPSY. A helical transmembrane segment spans residues 117–137; sequence IFMLTFFMAFLFNWIGFFLSF. Residues 138 to 143 are Extracellular-facing; it reads CLTTSA. Residues 144 to 164 traverse the membrane as a helical segment; sequence AGRYGAISGFGLSLIKWILIV. Residues 165 to 172 are Cytoplasmic-facing; the sequence is RFSTYFPG. Residues 173–193 form a helical membrane-spanning segment; sequence YFDGQYWLWWVFLVLGFLLFL. The Extracellular portion of the chain corresponds to 194 to 221; sequence RGFINYAKVRKMPETFSNLPRTRVLFIY.

In terms of assembly, forms heterodimers with NDFIP2. Interacts with several E3 ubiquitin-protein ligases, including ITCH, NEDD4, NEDD4L and WWP2. The interaction with NEDD4, NEDD4L and ITCH leads to relocalization of these proteins to exosomes and eventually to exosomal secretion. Interacts with U2SURP. Interacts with SLC11A2/DMT1. Interacts with PTEN. May interact with phosphorylated EGFR. Interacts with BRAT1. Interacts with KCNH2. Interacts with MAVS. Part of a complex containing ITCH, NDFIP1 and MAP3K7. Interacts (via N-terminus) with UBE2L3; the interaction mediates recruitment of UBE2L3 to ITCH. Ubiquitinated by NEDD4; mono-, di- and polyubiquitinated forms are detected. Ubiquitination regulates its degradation. Post-translationally, undergoes transient tyrosine phosphorylation following EGF stimulation, most probably by catalyzed by SRC. Phosphorylation SRC is enhanced in the presence of NDFIP2 which may act as a scaffold to recruit SRC to NDFIP1. Highly expressed in embryonic and early postnatal cortex (at protein level). Widely expressed. Hardly detectable in resting T-cells; up-regulated in T-cells in response to activation.

It is found in the endosome membrane. The protein localises to the golgi apparatus membrane. Its subcellular location is the synapse. It localises to the synaptosome. The protein resides in the cell projection. It is found in the dendrite. The protein localises to the secreted. Its function is as follows. Activates HECT domain-containing E3 ubiquitin-protein ligases, including NEDD4 and ITCH, and consequently modulates the stability of their targets. As a result, controls many cellular processes. Prevents chronic T-helper cell-mediated inflammation by activating ITCH and thus controlling JUNB degradation. Promotes pancreatic beta cell death through degradation of JUNB and inhibition of the unfolded protein response, leading to reduction of insulin secretion. Restricts the production of pro-inflammatory cytokines in effector Th17 T-cells by promoting ITCH-mediated ubiquitination and degradation of RORC. Together with NDFIP2, limits the cytokine signaling and expansion of effector Th2 T-cells by promoting degradation of JAK1, probably by ITCH- and NEDD4L-mediated ubiquitination. Regulates peripheral T-cell tolerance to self and foreign antigens, forcing the exit of naive CD4+ T-cells from the cell cycle before they become effector T-cells. Negatively regulates RLR-mediated antiviral response by promoting SMURF1-mediated ubiquitination and subsequent degradation of MAVS. Negatively regulates KCNH2 potassium channel activity by decreasing its cell-surface expression and interfering with channel maturation through recruitment of NEDD4L to the Golgi apparatus where it mediates KCNH2 degradation. In cortical neurons, mediates the ubiquitination of the divalent metal transporter SLC11A2/DMT1 by NEDD4L, leading to its down-regulation and protection of the cells from cobalt and iron toxicity. Important for normal development of dendrites and dendritic spines in cortex. Enhances the ubiquitination of BRAT1 mediated by: NEDD4, NEDD4L and ITCH and is required for the nuclear localization of ubiquitinated BRAT1. Enhances the ITCH-mediated ubiquitination of MAP3K7 by recruiting E2 ubiquitin-conjugating enzyme UBE2L3 to ITCH. Modulates EGFR signaling through multiple pathways. In particular, may regulate the ratio of AKT1-to-MAPK8 signaling in response to EGF, acting on AKT1 probably through PTEN destabilization and on MAPK8 through ITCH-dependent MAP2K4 inactivation. As a result, may control cell growth rate. Inhibits cell proliferation by promoting PTEN nuclear localization and changing its signaling specificity. The sequence is that of NEDD4 family-interacting protein 1 (Ndfip1) from Mus musculus (Mouse).